The chain runs to 68 residues: Large ribosomal subunit protein bL32 (68 aa).

The interval 1–24 (MAVPQNRVTRSRRNMRRSHDALVA) is disordered.

This sequence belongs to the bacterial ribosomal protein bL32 family.

This Paracoccus denitrificans (strain Pd 1222) protein is Large ribosomal subunit protein bL32.